Reading from the N-terminus, the 674-residue chain is Probable nucleolar GTP-binding protein 1 (674 aa).

The 178-residue stretch at arginine 169–phenylalanine 346 folds into the OBG-type G domain. GTP is bound by residues glycine 175–serine 182, aspartate 221–isoleucine 225, and asparagine 289–aspartate 292. The span at arginine 518–serine 527 shows a compositional bias: basic and acidic residues. Disordered stretches follow at residues arginine 518 to isoleucine 538 and valine 564 to arginine 674. The span at serine 570–serine 580 shows a compositional bias: basic residues. Composition is skewed to basic and acidic residues over residues glycine 619–aspartate 633 and asparagine 641–valine 653.

The protein belongs to the TRAFAC class OBG-HflX-like GTPase superfamily. OBG GTPase family. NOG subfamily.

It localises to the nucleus. The protein localises to the nucleolus. Functionally, involved in the biogenesis of the 60S ribosomal subunit. This chain is Probable nucleolar GTP-binding protein 1 (nog1), found in Dictyostelium discoideum (Social amoeba).